Reading from the N-terminus, the 91-residue chain is Uteroglobin (91 aa).

An N-terminal signal peptide occupies residues 1–21 (MKLAITITLAILALCCSPASA).

Belongs to the secretoglobin family. In terms of assembly, antiparallel homodimer; disulfide-linked. Interaction with LMBR1L is controversial. As to expression, club cells (nonciliated cells of the surface epithelium of the pulmonary airways). Expressed in lung, uterus, and prostate.

The protein resides in the secreted. Binds phosphatidylcholine, phosphatidylinositol, polychlorinated biphenyls (PCB) and weakly progesterone, potent inhibitor of phospholipase A2. In Equus caballus (Horse), this protein is Uteroglobin (SCGB1A1).